Here is a 319-residue protein sequence, read N- to C-terminus: Formimidoylglutamase (319 aa).

Mn(2+) contacts are provided by histidine 127, aspartate 150, histidine 152, aspartate 154, aspartate 242, and aspartate 244.

The protein belongs to the arginase family. Requires Mn(2+) as cofactor.

The catalysed reaction is N-formimidoyl-L-glutamate + H2O = formamide + L-glutamate. Its pathway is amino-acid degradation; L-histidine degradation into L-glutamate; L-glutamate from N-formimidoyl-L-glutamate (hydrolase route): step 1/1. In terms of biological role, catalyzes the conversion of N-formimidoyl-L-glutamate to L-glutamate and formamide. The protein is Formimidoylglutamase of Halalkalibacterium halodurans (strain ATCC BAA-125 / DSM 18197 / FERM 7344 / JCM 9153 / C-125) (Bacillus halodurans).